A 129-amino-acid chain; its full sequence is Ribosome-binding factor A (129 aa).

It belongs to the RbfA family. As to quaternary structure, monomer. Binds 30S ribosomal subunits, but not 50S ribosomal subunits or 70S ribosomes.

It localises to the cytoplasm. In terms of biological role, one of several proteins that assist in the late maturation steps of the functional core of the 30S ribosomal subunit. Associates with free 30S ribosomal subunits (but not with 30S subunits that are part of 70S ribosomes or polysomes). Required for efficient processing of 16S rRNA. May interact with the 5'-terminal helix region of 16S rRNA. This chain is Ribosome-binding factor A, found in Thermomicrobium roseum (strain ATCC 27502 / DSM 5159 / P-2).